Consider the following 169-residue polypeptide: Cell division inhibitor SulA (169 aa).

The tract at residues 106–112 (ALRTGNY) is ftsZ binding. The interval 162 to 169 (KIHSNLYH) is lon protease binding.

This sequence belongs to the SulA family. As to quaternary structure, interacts with FtsZ. Post-translationally, is rapidly cleaved and degraded by the Lon protease once DNA damage is repaired.

Functionally, component of the SOS system and an inhibitor of cell division. Accumulation of SulA causes rapid cessation of cell division and the appearance of long, non-septate filaments. In the presence of GTP, binds a polymerization-competent form of FtsZ in a 1:1 ratio, thus inhibiting FtsZ polymerization and therefore preventing it from participating in the assembly of the Z ring. This mechanism prevents the premature segregation of damaged DNA to daughter cells during cell division. In Citrobacter koseri (strain ATCC BAA-895 / CDC 4225-83 / SGSC4696), this protein is Cell division inhibitor SulA.